The following is a 945-amino-acid chain: Isoleucine--tRNA ligase (945 aa).

The 'HIGH' region signature appears at 66-76 (PYANGDIHLGH). E581 contributes to the L-isoleucyl-5'-AMP binding site. Residues 622–626 (KMSKS) carry the 'KMSKS' region motif. ATP is bound at residue K625. Zn(2+) is bound by residues C908, C911, C928, and C931.

Belongs to the class-I aminoacyl-tRNA synthetase family. IleS type 1 subfamily. In terms of assembly, monomer. It depends on Zn(2+) as a cofactor.

It is found in the cytoplasm. It catalyses the reaction tRNA(Ile) + L-isoleucine + ATP = L-isoleucyl-tRNA(Ile) + AMP + diphosphate. Functionally, catalyzes the attachment of isoleucine to tRNA(Ile). As IleRS can inadvertently accommodate and process structurally similar amino acids such as valine, to avoid such errors it has two additional distinct tRNA(Ile)-dependent editing activities. One activity is designated as 'pretransfer' editing and involves the hydrolysis of activated Val-AMP. The other activity is designated 'posttransfer' editing and involves deacylation of mischarged Val-tRNA(Ile). This is Isoleucine--tRNA ligase from Burkholderia cenocepacia (strain ATCC BAA-245 / DSM 16553 / LMG 16656 / NCTC 13227 / J2315 / CF5610) (Burkholderia cepacia (strain J2315)).